A 177-amino-acid polypeptide reads, in one-letter code: Large ribosomal subunit protein uL6 (177 aa).

The protein belongs to the universal ribosomal protein uL6 family. In terms of assembly, part of the 50S ribosomal subunit.

Its function is as follows. This protein binds to the 23S rRNA, and is important in its secondary structure. It is located near the subunit interface in the base of the L7/L12 stalk, and near the tRNA binding site of the peptidyltransferase center. This is Large ribosomal subunit protein uL6 from Latilactobacillus sakei subsp. sakei (strain 23K) (Lactobacillus sakei subsp. sakei).